The following is a 774-amino-acid chain: Transcription factor MBS1 (774 aa).

Residues Glu37–Pro143 enclose the HTH APSES-type domain. A DNA-binding region (H-T-H motif) is located at residues Ala68 to Glu89. 2 disordered regions span residues Val135–Ala180 and Arg209–Val229. Over residues Ala155 to Arg165 the composition is skewed to basic and acidic residues. The segment covering Thr166–Thr176 has biased composition (polar residues). ANK repeat units lie at residues Asp348 to Ala377 and Glu467 to Ile496. The segment at Glu752 to Gln774 is disordered. Polar residues predominate over residues Asn757–Gln774.

It localises to the nucleus. Functionally, transcription factor that positively regulates ergosterol biosynthesis and thereby affects polyene and azole drug susceptibility. Plays a role in maintenance of membrane stability and osmotic stress response. Involved in genotoxic and oxidative stress responses. Also promotes production of melanin and capsule and thereby is required for full virulence. In Cryptococcus neoformans var. grubii serotype A (strain H99 / ATCC 208821 / CBS 10515 / FGSC 9487) (Filobasidiella neoformans var. grubii), this protein is Transcription factor MBS1.